Reading from the N-terminus, the 144-residue chain is Actin-associated protein FAM107A (144 aa).

A coiled-coil region spans residues 70 to 90 (VLEHRRRNQLIKKKEEELEAK). A Nuclear localization signal motif is present at residues 74 to 84 (RRRNQLIKKKE). Positions 104–123 (QQRLNQLENPPQRDEDHAPE) are disordered. Over residues 114–123 (PQRDEDHAPE) the composition is skewed to basic and acidic residues.

As to quaternary structure, interacts with ACTB. Interacts with F-actin. Interacts with PRDX1. Interacts with COMMD1; this interaction stabilizes COMMD1 in the nucleus. Interacts with MAP1A. As to expression, expressed in septum, the neocortex, the CA3 region of the hippocampus and the cerebellum (at protein level).

Its subcellular location is the nucleus. The protein resides in the cytoplasm. The protein localises to the cytoskeleton. It is found in the stress fiber. It localises to the cell junction. Its subcellular location is the focal adhesion. The protein resides in the cell projection. The protein localises to the ruffle membrane. It is found in the synapse. Functionally, stress-inducible actin-binding protein that plays a role in synaptic and cognitive functions by modulating actin filamentous (F-actin) dynamics. Mediates polymerization of globular actin to F-actin. Also binds to, stabilizes and bundles F-actin. Involved in synaptic function by regulating neurite outgrowth in an actin-dependent manner and for the acquisition of hippocampus-dependent cognitive function, such as learning and long-term memory. Plays a role in the actin and microtubule cytoskeleton organization; negatively regulates focal adhesion (FA) assembly promoting malignant glial cell migration in an actin-, microtubule- and MAP1A-dependent manner. Also involved in neuroblastoma G1/S phase cell cycle progression and cell proliferation inhibition by stimulating ubiquitination of NF-kappa-B subunit RELA and NF-kappa-B degradation in a COMMD1- and actin-dependent manner. May play a role in tumor development. In Mus musculus (Mouse), this protein is Actin-associated protein FAM107A.